A 138-amino-acid chain; its full sequence is Proline-rich protein 34 (138 aa).

The segment covering 22 to 37 (SAPTSPPNPATRPAPG) has biased composition (pro residues). Disordered regions lie at residues 22-55 (SAPT…PTRG) and 81-107 (APRL…SPAR).

This is Proline-rich protein 34 (PRR34) from Homo sapiens (Human).